The sequence spans 779 residues: Beta-galactosidase 15 (779 aa).

A signal peptide spans 1 to 19 (MVSLSFILCCVLVSSCAYA). Asn-148 carries N-linked (GlcNAc...) asparagine glycosylation. Glu-178 acts as the Proton donor in catalysis. The active-site Nucleophile is the Glu-247. N-linked (GlcNAc...) asparagine glycans are attached at residues Asn-248, Asn-345, Asn-374, Asn-489, Asn-495, and Asn-555. The SUEL-type lectin domain occupies 694–779 (VYEKNVLELS…AKRLAVEAIC (86 aa)).

Belongs to the glycosyl hydrolase 35 family. Ubiquitous, with higher levels in roots and siliques.

It localises to the secreted. The protein resides in the extracellular space. The protein localises to the apoplast. The enzyme catalyses Hydrolysis of terminal non-reducing beta-D-galactose residues in beta-D-galactosides.. In Arabidopsis thaliana (Mouse-ear cress), this protein is Beta-galactosidase 15 (BGAL15).